Consider the following 89-residue polypeptide: UPF0237 protein DIP1286 (89 aa).

Residues 4–78 form the ACT domain; that stretch reads IISVTGADHT…KDQNLVIRIQ (75 aa).

This sequence belongs to the UPF0237 family.

The polypeptide is UPF0237 protein DIP1286 (Corynebacterium diphtheriae (strain ATCC 700971 / NCTC 13129 / Biotype gravis)).